We begin with the raw amino-acid sequence, 295 residues long: Signal-transducing adaptor protein 1 (295 aa).

The PH domain occupies Pro-25 to Glu-121. Position 168 is a phosphotyrosine (Tyr-168). The SH2 domain occupies Ala-177–Ser-280. The tract at residues Ser-270–Ala-295 is disordered.

Interacts with KIT and CSF1R. Interacts with URI1; the interaction is phosphorylation-dependent and occurs in a growth-dependent manner. Phosphorylated on tyrosine by TEC. Phosphorylated on tyrosine by KIT.

The protein localises to the nucleus. The protein resides in the cytoplasm. Its subcellular location is the mitochondrion. Functionally, in BCR signaling, appears to function as a docking protein acting downstream of TEC and participates in a positive feedback loop by increasing the activity of TEC. The sequence is that of Signal-transducing adaptor protein 1 (STAP1) from Homo sapiens (Human).